The primary structure comprises 515 residues: Bifunctional purine biosynthesis protein PurH (515 aa).

Residues 1–145 form the MGS-like domain; that stretch reads MTKRALISVS…KNHASVTVVV (145 aa).

It belongs to the PurH family.

It carries out the reaction (6R)-10-formyltetrahydrofolate + 5-amino-1-(5-phospho-beta-D-ribosyl)imidazole-4-carboxamide = 5-formamido-1-(5-phospho-D-ribosyl)imidazole-4-carboxamide + (6S)-5,6,7,8-tetrahydrofolate. The enzyme catalyses IMP + H2O = 5-formamido-1-(5-phospho-D-ribosyl)imidazole-4-carboxamide. The protein operates within purine metabolism; IMP biosynthesis via de novo pathway; 5-formamido-1-(5-phospho-D-ribosyl)imidazole-4-carboxamide from 5-amino-1-(5-phospho-D-ribosyl)imidazole-4-carboxamide (10-formyl THF route): step 1/1. Its pathway is purine metabolism; IMP biosynthesis via de novo pathway; IMP from 5-formamido-1-(5-phospho-D-ribosyl)imidazole-4-carboxamide: step 1/1. The protein is Bifunctional purine biosynthesis protein PurH of Streptococcus equi subsp. zooepidemicus (strain H70).